We begin with the raw amino-acid sequence, 435 residues long: MPSETITPLLAHRARTNIQWFTHKHMRQVSRLNAKQHRVNMMTAENWSIRDELVDQYKTLFAQHLSPRHLSYADGMGGDAELLQAAADFFNRVFAAHSRVQPAHLVVGAGCSSLLENLLYDICEPGEGVLIETPFWGGFETSFVLRSNVTAVHVRPPCHGNGSADLDRLVSAYIEAYERALRQAPCRIKAILVCNPHNPCGHIYPPRVIQALLQFAQRHDLFYISDEIYALSTLDEQTAFTSVLSIDVAALGVDLARVFTLYSISKDLGSSGLRLGFGITQAHPDLRLSLAISNHSRVSTFTSLVITALLHDPEAATAILHQNRAALQRSAKLISDFLAFHQIPFVPPAAGVYVWARLGWRSSSRPGDEPSWDEEARLNDRFEAAGVSVGAGQGYCASEPGWFRITFAIPREELVAGLRRIEQVVGMEGQKWTAI.

Lysine 266 is subject to N6-(pyridoxal phosphate)lysine.

The protein belongs to the class-I pyridoxal-phosphate-dependent aminotransferase family. The cofactor is pyridoxal 5'-phosphate.

It participates in mycotoxin biosynthesis. Functionally, probable aminotransferase; part of the gene cluster that mediates the biosynthesis of gliotoxin, a member of the epipolythiodioxopiperazine (ETP) class of toxins characterized by a disulfide bridged cyclic dipeptide. The first step in gliotoxin biosynthesis is the condensation of serine and phenylalanine to form the cyclo-L-phenylalanyl-L-serine diketopiperazine (DKP) by the NRPS gliP. GliP is also able to produce the DKP cyclo-L-tryptophanyl-L-serine, suggesting that the substrate specificity of the first adenylation (A) domain in gliP is sufficiently relaxed to accommodate both L-Phe and L-Trp. The cytochrome P450 monooxygenase gliC has been shown to catalyze the subsequent hydroxylation of the alpha-carbon of L-Phe in cyclo-L-phenylalanyl-L-serine whereas the second cytochrome P450 enzyme, gliF, is presumably involved in the modification of the DKP side chain. The glutathione S-transferase (GST) gliG then forms a bis-glutathionylated biosynthetic intermediate which is responsible for the sulfurization of gliotoxin. This bis-glutathionylated intermediate is subsequently processed by the gamma-glutamyl cyclotransferase gliK to remove both gamma-glutamyl moieties. Subsequent processing via gliI yields a biosynthetic intermediate, which is N-methylated via the N-methyltransferase gliN, before the gliotoxin oxidoreductase gliT-mediated disulfide bridge closure. GliN-mediated amide methylation confers stability to ETP, damping the spontaneous formation of tri- and tetrasulfides. Intracellular dithiol gliotoxin oxidized by gliT is subsequently effluxed by gliA. Gliotoxin contributes to pathogenesis during invasive aspergillosis. In macrophages and neutrophils, gliotoxin showed inhibition of various different cell functions including cytokine production, antigen presentation, phagocytosis, and production of reactive oxygen species. The chain is Probable aminotransferase gliI from Aspergillus fumigatus (strain ATCC MYA-4609 / CBS 101355 / FGSC A1100 / Af293) (Neosartorya fumigata).